The sequence spans 562 residues: Proton channel OTOP2 (562 aa).

The tract at residues 1–20 (MSEELAQGPKESPPAPRAGP) is disordered. The next 12 membrane-spanning stretches (helical) occupy residues 30-50 (LLSVLLAVNVLLLACTLISGG), 62-82 (VFALLTAMMLLATLWILFYLL), 100-120 (PIWLRGGLVLFGICTLIMDVF), 137-157 (ILHPLIQAVFVIIQTYFLWVS), 169-189 (TWCGLMFTLTTNLAIWMAAVV), 241-261 (FYLYPFNIEYSLFASTMLYVM), 289-309 (FFAGPVLGLLLFVVGLAVFII), 324-344 (ALVIYYSFNIVCLGLTTLVSL), 371-391 (LLMGAALGQYAISYYSIVAVV), 402-422 (LNLTHALLMIAQHTFQNMFII), 495-515 (DISLFLLLCNVILWIMPAFGA), and 527-547 (FYGYSLWAVIVNICLPFGIFY).

The protein belongs to the otopetrin family.

Its subcellular location is the cell membrane. The catalysed reaction is H(+)(in) = H(+)(out). Its activity is regulated as follows. Actives at neutral and alkaline extracellular pH, acid extracellular pH appears to inhibit the channel. Insensitive to activation by Zn(2+). Its function is as follows. Proton-selective ion channel open at neutral pH. Actives at neutral and alkaline extracellular pH, likely participates in some alkali-related physiological activities. The chain is Proton channel OTOP2 from Homo sapiens (Human).